The primary structure comprises 312 residues: Malate dehydrogenase (312 aa).

Residues 7 to 13 (GAAGGIG) and D34 each bind NAD(+). Substrate is bound by residues R81 and R87. NAD(+) contacts are provided by residues N94 and 117–119 (ITN). Residues N119 and R153 each coordinate substrate. The active-site Proton acceptor is H177. An NAD(+)-binding site is contributed by M227.

The protein belongs to the LDH/MDH superfamily. MDH type 1 family. Homodimer.

It carries out the reaction (S)-malate + NAD(+) = oxaloacetate + NADH + H(+). In terms of biological role, catalyzes the reversible oxidation of malate to oxaloacetate. This Salmonella arizonae (strain ATCC BAA-731 / CDC346-86 / RSK2980) protein is Malate dehydrogenase.